We begin with the raw amino-acid sequence, 73 residues long: Conotoxin ArMKLT2-022 (73 aa).

Positions 1-22 (MKLTCVLIIAVLFLTACQLTTG) are cleaved as a signal peptide. Residues 23–40 (EQKDHAQRSADRNSKLTR) constitute a propeptide that is removed on maturation. The residue at position 41 (Gln41) is a Pyrrolidone carboxylic acid. Disulfide bonds link Cys42/Cys56, Cys49/Cys60, and Cys55/Cys67.

This sequence belongs to the conotoxin O1 superfamily. In terms of tissue distribution, expressed by the venom duct.

It is found in the secreted. In Conus arenatus (Sand-dusted cone), this protein is Conotoxin ArMKLT2-022.